A 284-amino-acid chain; its full sequence is 1D-myo-inositol 2-acetamido-2-deoxy-alpha-D-glucopyranoside deacetylase (284 aa).

Zn(2+) contacts are provided by H12, D15, and H146.

This sequence belongs to the MshB deacetylase family. Requires Zn(2+) as cofactor.

It catalyses the reaction 1D-myo-inositol 2-acetamido-2-deoxy-alpha-D-glucopyranoside + H2O = 1D-myo-inositol 2-amino-2-deoxy-alpha-D-glucopyranoside + acetate. In terms of biological role, catalyzes the deacetylation of 1D-myo-inositol 2-acetamido-2-deoxy-alpha-D-glucopyranoside (GlcNAc-Ins) in the mycothiol biosynthesis pathway. The sequence is that of 1D-myo-inositol 2-acetamido-2-deoxy-alpha-D-glucopyranoside deacetylase from Mycolicibacterium gilvum (strain PYR-GCK) (Mycobacterium gilvum (strain PYR-GCK)).